A 20-amino-acid polypeptide reads, in one-letter code: Protein YfiS (20 aa).

In Escherichia coli (strain K12), this protein is Protein YfiS.